A 113-amino-acid chain; its full sequence is Nucleoid-associated protein SAV_4556 (113 aa).

The protein belongs to the YbaB/EbfC family. Homodimer.

The protein resides in the cytoplasm. The protein localises to the nucleoid. In terms of biological role, binds to DNA and alters its conformation. May be involved in regulation of gene expression, nucleoid organization and DNA protection. In Streptomyces avermitilis (strain ATCC 31267 / DSM 46492 / JCM 5070 / NBRC 14893 / NCIMB 12804 / NRRL 8165 / MA-4680), this protein is Nucleoid-associated protein SAV_4556.